Here is a 360-residue protein sequence, read N- to C-terminus: MKFIIKTQKGFENIVVNNLKEIVDDFNYIVSPDGYQGIVIVESDEDIEDKILQIPEVERVLKVYFETETDFDKIVNLAEKIKDYIKEDETFAVETKKRGKHDFSSTDINIVLGAKIKDLTNASVDLNNPDKVVHVEVFKNKTYVSITPGEKFKKYTKEKRNARELFKKVVIVQMPYLGEKIVCKRFGEAIGRAAQGFEVKELIIAPKEKVDAYELMEFIKGVKIGQHSRYEIQKRAYPFEIKLVPVTVQDLYQVVRDKRRDNRLLIITDPKGDELSKIKDKLAYDLRKKREIIVFCGSREGIPRGLFRFADYIVDLAPHMTFATEHAIPAALIALWGVYSGEDLENSSKEEKTESNSNGE.

The 104-residue stretch at 45–148 (EDIEDKILQI…KNKTYVSITP (104 aa)) folds into the THUMP domain.

This is an uncharacterized protein from Methanocaldococcus jannaschii (strain ATCC 43067 / DSM 2661 / JAL-1 / JCM 10045 / NBRC 100440) (Methanococcus jannaschii).